Here is a 595-residue protein sequence, read N- to C-terminus: Putative capsid protein V20 (595 aa).

The protein resides in the virion. In terms of biological role, may self assemble to form an icosahedral capsid. Most abundant protein in the virion. The protein is Putative capsid protein V20 of Sputnik virophage.